Reading from the N-terminus, the 220-residue chain is Probable chemoreceptor glutamine deamidase CheD (220 aa).

It belongs to the CheD family.

The enzyme catalyses L-glutaminyl-[protein] + H2O = L-glutamyl-[protein] + NH4(+). Probably deamidates glutamine residues to glutamate on methyl-accepting chemotaxis receptors (MCPs), playing an important role in chemotaxis. The protein is Probable chemoreceptor glutamine deamidase CheD of Cupriavidus metallidurans (strain ATCC 43123 / DSM 2839 / NBRC 102507 / CH34) (Ralstonia metallidurans).